The chain runs to 135 residues: Protein PsiE homolog (135 aa).

The next 4 helical transmembrane spans lie at 14–34 (LQTI…IFLV), 54–74 (YQLI…ALIV), 82–102 (HFPL…LIIV), and 107–127 (PSDT…LYLA).

Belongs to the PsiE family.

The protein resides in the cell inner membrane. The sequence is that of Protein PsiE homolog from Pectobacterium atrosepticum (strain SCRI 1043 / ATCC BAA-672) (Erwinia carotovora subsp. atroseptica).